The following is a 56-amino-acid chain: Conotoxin Cal6.41b (56 aa).

The first 23 residues, methionine 1–threonine 23, serve as a signal peptide directing secretion. Intrachain disulfides connect cysteine 27/cysteine 41, cysteine 33/cysteine 50, and cysteine 40/cysteine 54.

In terms of tissue distribution, expressed by the venom duct.

Its subcellular location is the secreted. Its function is as follows. Probable neurotoxin. In Californiconus californicus (California cone), this protein is Conotoxin Cal6.41b.